Reading from the N-terminus, the 306-residue chain is MSCRELVILGCSSQQPTRTRNQGAYLFRWNNEGLLFDPGEGTQRQFIFANIAPTIVSRIFISHFHGDHCLGLGSMLMRLNLDKVTHPIHCYYPASGKKYFDRLRYGTIYHETIRVIEHPIDKEGIVEDFGNFRIEARKLNHLVDTLGWRITEPDTIKFIPEKIKAAGLRGPIMQDLLRNEHVTVNGKTLYLKDLSYIRKGDSIAVIADTLPCPSIVDLAKNARIMLCESTYLEEHSHLAESHYHMTAKQAATQALAAGAQQLVLTHFSARYLNSKEFEIEAGKIFPNVTAAEEFRSYPFPKNPSSK.

Zn(2+) is bound by residues His63, His65, Asp67, His68, His141, Asp208, and His266. The active-site Proton acceptor is the Asp67.

This sequence belongs to the RNase Z family. Homodimer. Zn(2+) is required as a cofactor.

The catalysed reaction is Endonucleolytic cleavage of RNA, removing extra 3' nucleotides from tRNA precursor, generating 3' termini of tRNAs. A 3'-hydroxy group is left at the tRNA terminus and a 5'-phosphoryl group is left at the trailer molecule.. Functionally, zinc phosphodiesterase, which displays some tRNA 3'-processing endonuclease activity. Probably involved in tRNA maturation, by removing a 3'-trailer from precursor tRNA. The chain is Ribonuclease Z from Chlamydia abortus (strain DSM 27085 / S26/3) (Chlamydophila abortus).